A 309-amino-acid chain; its full sequence is Ribonuclease Z (309 aa).

The Zn(2+) site is built by His63, His65, Asp67, His68, His141, Asp212, and His270. Asp67 serves as the catalytic Proton acceptor.

The protein belongs to the RNase Z family. In terms of assembly, homodimer. Zn(2+) serves as cofactor.

The catalysed reaction is Endonucleolytic cleavage of RNA, removing extra 3' nucleotides from tRNA precursor, generating 3' termini of tRNAs. A 3'-hydroxy group is left at the tRNA terminus and a 5'-phosphoryl group is left at the trailer molecule.. Functionally, zinc phosphodiesterase, which displays some tRNA 3'-processing endonuclease activity. Probably involved in tRNA maturation, by removing a 3'-trailer from precursor tRNA. The sequence is that of Ribonuclease Z from Halalkalibacterium halodurans (strain ATCC BAA-125 / DSM 18197 / FERM 7344 / JCM 9153 / C-125) (Bacillus halodurans).